Consider the following 617-residue polypeptide: 1-deoxy-D-xylulose-5-phosphate synthase (617 aa).

Residues His-77 and 118–120 (GHS) contribute to the thiamine diphosphate site. Asp-149 provides a ligand contact to Mg(2+). Thiamine diphosphate is bound by residues 150-151 (GA), Asn-178, Tyr-286, and Glu-367. Position 178 (Asn-178) interacts with Mg(2+).

Belongs to the transketolase family. DXPS subfamily. Homodimer. The cofactor is Mg(2+). Thiamine diphosphate serves as cofactor.

The catalysed reaction is D-glyceraldehyde 3-phosphate + pyruvate + H(+) = 1-deoxy-D-xylulose 5-phosphate + CO2. It participates in metabolic intermediate biosynthesis; 1-deoxy-D-xylulose 5-phosphate biosynthesis; 1-deoxy-D-xylulose 5-phosphate from D-glyceraldehyde 3-phosphate and pyruvate: step 1/1. Its function is as follows. Catalyzes the acyloin condensation reaction between C atoms 2 and 3 of pyruvate and glyceraldehyde 3-phosphate to yield 1-deoxy-D-xylulose-5-phosphate (DXP). The polypeptide is 1-deoxy-D-xylulose-5-phosphate synthase (Actinobacillus pleuropneumoniae serotype 5b (strain L20)).